The sequence spans 171 residues: 3-hydroxydecanoyl-[acyl-carrier-protein] dehydratase (171 aa).

The active site involves His-71.

This sequence belongs to the thioester dehydratase family. FabA subfamily. As to quaternary structure, homodimer.

It localises to the cytoplasm. It catalyses the reaction a (3R)-hydroxyacyl-[ACP] = a (2E)-enoyl-[ACP] + H2O. The enzyme catalyses (3R)-hydroxydecanoyl-[ACP] = (2E)-decenoyl-[ACP] + H2O. The catalysed reaction is (2E)-decenoyl-[ACP] = (3Z)-decenoyl-[ACP]. The protein operates within lipid metabolism; fatty acid biosynthesis. Functionally, necessary for the introduction of cis unsaturation into fatty acids. Catalyzes the dehydration of (3R)-3-hydroxydecanoyl-ACP to E-(2)-decenoyl-ACP and then its isomerization to Z-(3)-decenoyl-ACP. Can catalyze the dehydratase reaction for beta-hydroxyacyl-ACPs with saturated chain lengths up to 16:0, being most active on intermediate chain length. This is 3-hydroxydecanoyl-[acyl-carrier-protein] dehydratase from Agrobacterium fabrum (strain C58 / ATCC 33970) (Agrobacterium tumefaciens (strain C58)).